The following is a 622-amino-acid chain: MACYIYQLPSWVLDDLCRNIDTLSEWDWMQFASYVITDLTQLRKIKSMERVQGVSITRELLWWWSMRQATVQQLVDLLCHLELYRAAQIVLSWKPVPESTSPLPAFPEAVKPGAVATSRRNLKDEQEKVRPVKPRSLLDTGPIMAGAQRQRPCEMDAPCSLKTDAPDSPQSKYCSTSTSAPKQERLLGLPGDRLFWSEADVVQATEDFDQSHRISEGTFADIYQGQRNGVAFAFKKLREVAGSSPGSMDRFLQAEMQLCLRCCHANVLPLLGFCTGRQFHSLIYPYMANGSLHDRLWAQGNSDMLPWPQRASICSGLLLAVEHLHSLDIIHSNVKSANVLLDQHLNPKLAHPVAHPHPDNKKTKYTVMRTHLFQASAAYLPEHFIRVGQLTKQVDIFSCGIVLAEVLTGIPAMDKDRSPVYLKDLLLSEIPNSTSSVCSRKTSMGKAVVKEICQRHVEKRAGLLPEACEEAWATAVSVCLRRRNASVEEARVSLAGVEEQLRGQLSLPWSRVSEATGSSSNTPEETDDVDNSSLSVPSLVMMASCPGAASSPLFTGHGAAQPSTSGRQEADSSSEACTGPQTPQNATETSWKIEINEAKRRLMENIVLYKEERLDSSELFGP.

In terms of domain architecture, Death spans 13 to 94 (LDDLCRNIDT…RAAQIVLSWK (82 aa)). The Protein kinase domain occupies 208 to 473 (FDQSHRISEG…LPEACEEAWA (266 aa)). Residues 214–222 (ISEGTFADI), Lys235, and 335–338 (KSAN) each bind ATP. Disordered regions lie at residues 511–532 (RVSE…VDNS) and 553–591 (LFTG…ETSW). 2 stretches are compositionally biased toward polar residues: residues 513-523 (SEATGSSSNTP) and 561-590 (QPST…TETS).

This sequence belongs to the protein kinase superfamily. TKL Ser/Thr protein kinase family. Pelle subfamily. In terms of assembly, interacts with MYD88. IL-1 stimulation leads to the formation of a signaling complex which dissociates from the IL-1 receptor following the binding of PELI1. In terms of tissue distribution, ubiquitously expressed, with a higher expression observed in brain, spleen and liver. Isoform 1 and isoform 2 are considered agonist and isoform 3 and isoform 4 are considered antagonist.

Functionally, binds to the IL-1 type I receptor following IL-1 engagement, triggering intracellular signaling cascades leading to transcriptional up-regulation and mRNA stabilization. The chain is Interleukin-1 receptor-associated kinase-like 2 (Irak2) from Mus musculus (Mouse).